The chain runs to 196 residues: Probable GTP-binding protein EngB (196 aa).

One can recognise an EngB-type G domain in the interval 24–196; that stretch reads ELSEVALSGR…IWNLIEPYIS (173 aa). GTP contacts are provided by residues 32-39, 59-63, 77-80, 144-147, and 176-178; these read GRSNVGKS, GKTQT, DVPG, TKED, and YSS. Residues serine 39 and threonine 61 each contribute to the Mg(2+) site.

The protein belongs to the TRAFAC class TrmE-Era-EngA-EngB-Septin-like GTPase superfamily. EngB GTPase family. Requires Mg(2+) as cofactor.

Functionally, necessary for normal cell division and for the maintenance of normal septation. The sequence is that of Probable GTP-binding protein EngB from Staphylococcus aureus (strain MW2).